The chain runs to 114 residues: Probable 4-amino-4-deoxy-L-arabinose-phosphoundecaprenol flippase subunit ArnE (114 aa).

A run of 3 helical transmembrane segments spans residues 41–61 (PWLI…IYLL), 64–84 (LPLS…LIGS), and 94–114 (YHNW…GGLL). In terms of domain architecture, EamA spans 53-112 (GMLLWIYLLQRLPLSMAYPMLSINLVLVLIGSRLFFHEQISYHNWLGAGAIIIGALLLGG).

Belongs to the ArnE family. Heterodimer of ArnE and ArnF.

It localises to the cell inner membrane. It functions in the pathway bacterial outer membrane biogenesis; lipopolysaccharide biosynthesis. Functionally, translocates 4-amino-4-deoxy-L-arabinose-phosphoundecaprenol (alpha-L-Ara4N-phosphoundecaprenol) from the cytoplasmic to the periplasmic side of the inner membrane. The sequence is that of Probable 4-amino-4-deoxy-L-arabinose-phosphoundecaprenol flippase subunit ArnE from Aeromonas salmonicida (strain A449).